A 572-amino-acid polypeptide reads, in one-letter code: MYSTSLLRWLVVALVSAVPLVTAYGFVPYPQNDAFYYPPDGWQNTERGDILKDRKIQAATLGILKWNLDAWQVLYRTSGARPNTPSYTVTTVLVPYNAKRDHVVTIASPENSNFIQCAPSYAFRHTGVLEIANFEPRWEQMLYTLFLAEGWVVNAPDHEGPESAFSAGRLGGHMMLDSMRALQKYGPLNIPDNAMHIGHGYSGGSTPTGWAASLLERYAPELNVVGWSMGGSMTDPLYTLDSLDGNPTSSLVLAGALGIVDAYRDEVGNYLHDNVLTDEGKIAEKVMRNSCVYEAVIRYFGATFQSERYMKDGRKLSSFPELTHLTDMNTMGRYPQYTPKKPFRMFHALHDEEIAWHQANKTAVEWCNNGANVNFITFSSNDLVHVTTYLWNLPYLVQYMRDRFSNKDFYGGNCQFDVEPNNPLFDTSILGERFKELLEAVLDILGKKIGPKDSIILNMIKSGKNPNKGGVWNDVLKSTTVSPGEGGNKSPESKKATKKYKSESKAEKKQPDSIPSSSSKSSSDNKSAHAKYHAHGHGHGHASSNSNNGHSHSAKESSTSKGSSRRHVARFM.

An N-terminal signal peptide occupies residues 1 to 23 (MYSTSLLRWLVVALVSAVPLVTA). C117 and C291 are joined by a disulfide. S202 functions as the Nucleophile in the catalytic mechanism. Residue D351 is part of the active site. Residue N360 is glycosylated (N-linked (GlcNAc...) asparagine). H385 is an active-site residue. The segment at 468–572 (KGGVWNDVLK…SSRRHVARFM (105 aa)) is disordered. Basic and acidic residues predominate over residues 491-511 (PESKKATKKYKSESKAEKKQP). Over residues 512 to 525 (DSIPSSSSKSSSDN) the composition is skewed to low complexity. N-linked (GlcNAc...) asparagine glycosylation occurs at N525. Residues 528 to 540 (AHAKYHAHGHGHG) are compositionally biased toward basic residues. The span at 541-562 (HASSNSNNGHSHSAKESSTSKG) shows a compositional bias: low complexity. The segment covering 563–572 (SSRRHVARFM) has biased composition (basic residues).

The protein belongs to the AB hydrolase superfamily. Lipase family. Class Lip subfamily.

It localises to the secreted. The protein localises to the cell wall. The catalysed reaction is a triacylglycerol + H2O = a diacylglycerol + a fatty acid + H(+). It carries out the reaction a monoacylglycerol + H2O = glycerol + a fatty acid + H(+). It catalyses the reaction a diacylglycerol + H2O = a monoacylglycerol + a fatty acid + H(+). Functionally, secreted lipase involved in Dandruff and seborrheic dermatitis (D/SD) probably via lipase-mediated breakdown of sebaceous lipids and release of irritating free fatty acids. Shows only minimal activity against triolein. Mostly converts monoolein to di- and triolein, while free fatty acids are only produced in low amounts. This Malassezia globosa (strain ATCC MYA-4612 / CBS 7966) (Dandruff-associated fungus) protein is Secreted triacylglycerol lipase LIP6.